The chain runs to 380 residues: Aminomethyltransferase (380 aa).

It belongs to the GcvT family. As to quaternary structure, the glycine cleavage system is composed of four proteins: P, T, L and H.

It catalyses the reaction N(6)-[(R)-S(8)-aminomethyldihydrolipoyl]-L-lysyl-[protein] + (6S)-5,6,7,8-tetrahydrofolate = N(6)-[(R)-dihydrolipoyl]-L-lysyl-[protein] + (6R)-5,10-methylene-5,6,7,8-tetrahydrofolate + NH4(+). In terms of biological role, the glycine cleavage system catalyzes the degradation of glycine. The protein is Aminomethyltransferase of Koribacter versatilis (strain Ellin345).